The chain runs to 51 residues: U-Asilidin(1)-Mar1a (51 aa).

Residues Met1–Ala23 form the signal peptide. 3 cysteine pairs are disulfide-bonded: Cys26-Cys40, Cys33-Cys44, and Cys39-Cys49.

Belongs to the asilidin-1 family. In terms of tissue distribution, expressed by the venom gland. Is the most highly expressed peptide and is around 3000 times higher expressed in the thoracic glands compared to its body tissues.

The protein resides in the secreted. In terms of biological role, induces neurotoxic effect on honeybees, including slow movements, disorientation and paralysis. Since it provokes similar symptoms than omega-atracotoxin, it is probable that it acts in the same way by inhibiting voltage-gated calcium channels. The sequence is that of U-Asilidin(1)-Mar1a from Machimus arthriticus (Breck robberfly).